Consider the following 419-residue polypeptide: Copalyl diphosphate synthase 2, chloroplastic (419 aa).

Residue lysine 82 coordinates substrate.

The protein belongs to the terpene synthase family. Tpsc subfamily. Requires Mg(2+) as cofactor. Ubiquitous expression in roots, stems, leaves and flowers.

Its subcellular location is the plastid. It localises to the chloroplast. The enzyme catalyses (2E,6E,10E)-geranylgeranyl diphosphate = (+)-copalyl diphosphate. It participates in secondary metabolite biosynthesis; terpenoid biosynthesis. Its function is as follows. Involved in the biosynthesis of ent-kaurene diterpenoids natural products such as oridonin, miltiradiene, eriocalyxin B and nezukol, known to exhibit antitumor, anti-inflammatory and antibacterial activities. Catalyzes the conversion of (2E,6E,10E)-geranylgeranyl diphosphate (GGPP) to (+)-copalyl diphosphate ((+)-CPP). This Isodon rubescens (Rabdosia rubescens) protein is Copalyl diphosphate synthase 2, chloroplastic.